The primary structure comprises 357 residues: DNA integrity scanning protein DisA (357 aa).

The DAC domain maps to 3–141 (RPTLRETVAR…GGERHVVADS (139 aa)). ATP contacts are provided by residues G70, L88, and 101 to 105 (TRHRS).

Belongs to the DisA family. In terms of assembly, homooctamer. Mg(2+) serves as cofactor.

The enzyme catalyses 2 ATP = 3',3'-c-di-AMP + 2 diphosphate. In terms of biological role, participates in a DNA-damage check-point. DisA forms globular foci that rapidly scan along the chromosomes searching for lesions. Also has diadenylate cyclase activity, catalyzing the condensation of 2 ATP molecules into cyclic di-AMP (c-di-AMP). c-di-AMP likely acts as a signaling molecule that may couple DNA integrity with a cellular process. In Mycolicibacterium paratuberculosis (strain ATCC BAA-968 / K-10) (Mycobacterium paratuberculosis), this protein is DNA integrity scanning protein DisA.